Reading from the N-terminus, the 70-residue chain is Putative antitoxin VapB34 (70 aa).

Antitoxin component of a possible type II toxin-antitoxin (TA) system. The cognate toxin is VapC34. The protein is Putative antitoxin VapB34 (vapB34) of Mycobacterium tuberculosis (strain CDC 1551 / Oshkosh).